The following is a 511-amino-acid chain: Maturase K (511 aa).

This sequence belongs to the intron maturase 2 family. MatK subfamily.

It localises to the plastid. Its subcellular location is the chloroplast. Its function is as follows. Usually encoded in the trnK tRNA gene intron. Probably assists in splicing its own and other chloroplast group II introns. This Trifolium burchellianum (Wild clover) protein is Maturase K.